Reading from the N-terminus, the 212-residue chain is Peptide methionine sulfoxide reductase MsrA (212 aa).

Cys-52 is an active-site residue.

Belongs to the MsrA Met sulfoxide reductase family.

The catalysed reaction is L-methionyl-[protein] + [thioredoxin]-disulfide + H2O = L-methionyl-(S)-S-oxide-[protein] + [thioredoxin]-dithiol. It carries out the reaction [thioredoxin]-disulfide + L-methionine + H2O = L-methionine (S)-S-oxide + [thioredoxin]-dithiol. Has an important function as a repair enzyme for proteins that have been inactivated by oxidation. Catalyzes the reversible oxidation-reduction of methionine sulfoxide in proteins to methionine. This is Peptide methionine sulfoxide reductase MsrA from Salmonella paratyphi B (strain ATCC BAA-1250 / SPB7).